Consider the following 186-residue polypeptide: Large ribosomal subunit protein bL12c (186 aa).

A compositionally biased stretch (polar residues) spans 1 to 11 (MASTLSTITLR). The tract at residues 1 to 24 (MASTLSTITLRSPSPSTATSTHAS) is disordered. A chloroplast-targeting transit peptide spans 1-53 (MASTLSTITLRSPSPSTATSTHASIPFPKKTLEFPIRTPKLQNRRATFLRPLA). Over residues 12 to 24 (SPSPSTATSTHAS) the composition is skewed to low complexity.

This sequence belongs to the bacterial ribosomal protein bL12 family.

The protein localises to the plastid. Its subcellular location is the chloroplast. The sequence is that of Large ribosomal subunit protein bL12c from Nicotiana sylvestris (Wood tobacco).